A 342-amino-acid chain; its full sequence is Isopentenyl-diphosphate delta-isomerase (342 aa).

6 to 7 (RK) provides a ligand contact to substrate. FMN contacts are provided by residues S63, 64 to 66 (SMT), S94, and N122. A substrate-binding site is contributed by 94 to 96 (SMR). Q157 provides a ligand contact to substrate. E158 is a Mg(2+) binding site. FMN-binding positions include K189, T219, 269–271 (GLK), and 290–291 (AG).

It belongs to the IPP isomerase type 2 family. In terms of assembly, homooctamer. Dimer of tetramers. FMN is required as a cofactor. The cofactor is NADPH. Mg(2+) serves as cofactor.

Its subcellular location is the cytoplasm. The enzyme catalyses isopentenyl diphosphate = dimethylallyl diphosphate. In terms of biological role, involved in the biosynthesis of isoprenoids. Catalyzes the 1,3-allylic rearrangement of the homoallylic substrate isopentenyl (IPP) to its allylic isomer, dimethylallyl diphosphate (DMAPP). This chain is Isopentenyl-diphosphate delta-isomerase, found in Rickettsia bellii (strain RML369-C).